Here is a 236-residue protein sequence, read N- to C-terminus: Probable sulfate/thiosulfate import ATP-binding protein CysA (236 aa).

The region spanning 3-233 is the ABC transporter domain; the sequence is ILIENISKRF…PTNTFVTNFL (231 aa). 35-42 serves as a coordination point for ATP; sequence GPSGSGKS.

Belongs to the ABC transporter superfamily. Sulfate/tungstate importer (TC 3.A.1.6) family.

It is found in the plastid. It localises to the chloroplast. It carries out the reaction sulfate(out) + ATP + H2O = sulfate(in) + ADP + phosphate + H(+). The catalysed reaction is thiosulfate(out) + ATP + H2O = thiosulfate(in) + ADP + phosphate + H(+). Its function is as follows. Part of the ABC transporter complex involved in sulfate/thiosulfate import. Responsible for energy coupling to the transport system. This is Probable sulfate/thiosulfate import ATP-binding protein CysA from Chlorella vulgaris (Green alga).